Consider the following 506-residue polypeptide: ATP synthase subunit alpha (506 aa).

170-177 lines the ATP pocket; sequence GDRQTGKT.

Belongs to the ATPase alpha/beta chains family. In terms of assembly, F-type ATPases have 2 components, CF(1) - the catalytic core - and CF(0) - the membrane proton channel. CF(1) has five subunits: alpha(3), beta(3), gamma(1), delta(1), epsilon(1). CF(0) has four main subunits: a(1), b(1), b'(1) and c(9-12).

It localises to the cellular thylakoid membrane. The catalysed reaction is ATP + H2O + 4 H(+)(in) = ADP + phosphate + 5 H(+)(out). Its function is as follows. Produces ATP from ADP in the presence of a proton gradient across the membrane. The alpha chain is a regulatory subunit. In Parasynechococcus marenigrum (strain WH8102), this protein is ATP synthase subunit alpha.